The sequence spans 292 residues: Ribose import binding protein RbsB (292 aa).

Residues 1–23 (MKKLTALTSAVLLGLAVSSSASA) form the signal peptide.

Belongs to the bacterial solute-binding protein 2 family. In terms of assembly, the complex is composed of an ATP-binding protein (RbsA), two transmembrane proteins (RbsC) and a solute-binding protein (RbsB).

It is found in the periplasm. Part of the ABC transporter complex RbsABC involved in ribose import. Binds ribose. The chain is Ribose import binding protein RbsB (rbsB) from Haemophilus influenzae (strain ATCC 51907 / DSM 11121 / KW20 / Rd).